The sequence spans 1059 residues: Ubiquitin carboxyl-terminal hydrolase 36 (1059 aa).

2 disordered regions span residues 22–45 (LGGN…NGSL) and 102–145 (GKLV…KPKR). Residues 23-45 (GGNSSAGSSTDQAKSGEDTNGSL) show a composition bias toward polar residues. Residues 121–138 (HPNNQSHHNHPHPTSNPN) are compositionally biased toward low complexity. The 290-residue stretch at 168-457 (TGMINVGNTC…NAYIMFFELD (290 aa)) folds into the USP domain. The active-site Nucleophile is the C177. H416 acts as the Proton acceptor in catalysis. Disordered stretches follow at residues 464–512 (PPAN…YTNG), 554–853 (ATSA…VTSN), 941–1005 (RQRD…FYNQ), and 1022–1059 (FGGA…QQQT). Low complexity-rich tracts occupy residues 479 to 494 (STTP…PSPT) and 561 to 580 (NGNK…KSIN). Phosphoserine is present on residues S490 and S492. Residues 603 to 615 (TTAQLPSMPNMTE) are compositionally biased toward polar residues. Residues T632 and T636 each carry the phosphothreonine modification. Residues S646 and S648 each carry the phosphoserine modification. The span at 673–702 (ESGQTNGHSKTNGSLTNGSASSSVHVNNSK) shows a compositional bias: polar residues. The segment covering 703–720 (QKTDAIDEIFKSLKKSAD) has biased composition (basic and acidic residues). At S721 the chain carries Phosphoserine. Residues 721-730 (SEEDDDEEEP) show a composition bias toward acidic residues. Residues 740–750 (PQKQSQSQSKA) show a composition bias toward low complexity. Over residues 751-760 (PPSPKTPPSP) the composition is skewed to pro residues. At S753 the chain carries Phosphoserine. Position 756 is a phosphothreonine (T756). A Phosphoserine modification is found at S759. Positions 779–788 (DAIDDDDDAV) are enriched in acidic residues. At T799 the chain carries Phosphothreonine. Residues 806 to 818 (NPFSSSKPSTDSP) are compositionally biased toward polar residues. S817 carries the phosphoserine modification. T820 carries the post-translational modification Phosphothreonine. Over residues 833-853 (ALKSHQQPRVGNGYQSNVTSN) the composition is skewed to polar residues. Positions 963–974 (SGSAKGNNASNS) are enriched in low complexity.

Belongs to the peptidase C19 family. As to quaternary structure, interacts with atms/PAF1, but not with CycT.

It localises to the nucleus. It is found in the nucleolus. The enzyme catalyses Thiol-dependent hydrolysis of ester, thioester, amide, peptide and isopeptide bonds formed by the C-terminal Gly of ubiquitin (a 76-residue protein attached to proteins as an intracellular targeting signal).. Functionally, required for maintaining multiple types of adult stem cells, including male and female germline, epithelial follicle cell and intestinal stem cells. May function as a transcriptional repressor by continually deubiquiting histone H2B at the promoters of genes critical for cellular differentiation, thereby preventing histone H3 'Lys-4' trimethylation (H3K4). Controls selective autophagy activation by ubiquitinated proteins. This is Ubiquitin carboxyl-terminal hydrolase 36 (Usp36) from Drosophila sechellia (Fruit fly).